A 358-amino-acid polypeptide reads, in one-letter code: F-box only protein 25 (358 aa).

Residues 1-83 (MPFLGQDWRS…NDTNTQSFYR (83 aa)) are interaction with beta-actin. In terms of domain architecture, F-box spans 226–274 (LTLSDLPLHMLNNILYRFSDGWDIITLGQVTPTLYMLSEDRQLWKKLCQ).

Part of a SCF (SKP1-cullin-F-box) protein ligase complex consisting of FBXO25, SKP1, CUL1 and RBX1. Interacts directly with SKP1 and CUL1. Interacts (via C-terminus) with beta-actin (via N-terminus).

It localises to the nucleus. Its pathway is protein modification; protein ubiquitination. Substrate-recognition component of the SCF (SKP1-CUL1-F-box protein)-type E3 ubiquitin ligase complex. May play a role in accumulation of expanded polyglutamine (polyQ) protein huntingtin (HTT). The polypeptide is F-box only protein 25 (FBXO25) (Macaca fascicularis (Crab-eating macaque)).